The following is a 124-amino-acid chain: MAQIPPSLQDMVNRFNQAQAQLQSVLLRKQQYEAELKEVDKAISEIEKLSPDAKIFKNVGNFLVPQTRDAALQELKERKELLELHVKTLSRQETMLREQLDKLRDEINKELARLKGGEAAKGGG.

Belongs to the prefoldin subunit beta family. Heterohexamer of two alpha and four beta subunits.

The protein resides in the cytoplasm. Functionally, molecular chaperone capable of stabilizing a range of proteins. Seems to fulfill an ATP-independent, HSP70-like function in archaeal de novo protein folding. This Pyrobaculum arsenaticum (strain DSM 13514 / JCM 11321 / PZ6) protein is Prefoldin subunit beta.